The following is a 399-amino-acid chain: Leu/Ile/Val-binding protein homolog 7 (399 aa).

A signal peptide spans 1–22 (MEKHLIALSVAALQAGAAPASA).

It belongs to the leucine-binding protein family.

In terms of biological role, component of an amino-acid transport system. In Brucella abortus (strain 2308), this protein is Leu/Ile/Val-binding protein homolog 7.